The primary structure comprises 53 residues: Small ribosomal subunit protein uS14 (53 aa).

Residues Cys18, Cys21, Cys36, and Cys39 each contribute to the Zn(2+) site.

This sequence belongs to the universal ribosomal protein uS14 family. Zinc-binding uS14 subfamily. Part of the 30S ribosomal subunit. The cofactor is Zn(2+).

In terms of biological role, binds 16S rRNA, required for the assembly of 30S particles. This chain is Small ribosomal subunit protein uS14, found in Thermoplasma volcanium (strain ATCC 51530 / DSM 4299 / JCM 9571 / NBRC 15438 / GSS1).